Reading from the N-terminus, the 156-residue chain is Cyanate hydratase (156 aa).

Residues Arg96, Glu99, and Ser122 contribute to the active site.

It belongs to the cyanase family.

It catalyses the reaction cyanate + hydrogencarbonate + 3 H(+) = NH4(+) + 2 CO2. Its function is as follows. Catalyzes the reaction of cyanate with bicarbonate to produce ammonia and carbon dioxide. The chain is Cyanate hydratase from Pseudomonas fluorescens (strain ATCC BAA-477 / NRRL B-23932 / Pf-5).